Reading from the N-terminus, the 200-residue chain is RNA polymerase I-specific transcription initiation factor rrn11 (200 aa).

It localises to the nucleus. In terms of biological role, subunit of a multiprotein complex essential for the initiation of rDNA transcription by RNA polymerase I. Binding to the DNA template is dependent on the initial binding of other factors. This chain is RNA polymerase I-specific transcription initiation factor rrn11 (rrn11), found in Schizosaccharomyces pombe (strain 972 / ATCC 24843) (Fission yeast).